The sequence spans 158 residues: Superoxide dismutase [Cu-Zn] (158 aa).

His46, His48, and His63 together coordinate Cu cation. Cys57 and Cys149 form a disulfide bridge. Zn(2+) is bound by residues His63, His71, His80, and Asp83. His120 serves as a coordination point for Cu cation.

The protein belongs to the Cu-Zn superoxide dismutase family. Homodimer. Requires Cu cation as cofactor. It depends on Zn(2+) as a cofactor.

It localises to the cytoplasm. It catalyses the reaction 2 superoxide + 2 H(+) = H2O2 + O2. Its function is as follows. Destroys radicals which are normally produced within the cells and which are toxic to biological systems. The polypeptide is Superoxide dismutase [Cu-Zn] (SODC) (Brugia pahangi (Filarial nematode worm)).